A 101-amino-acid chain; its full sequence is NAD(P)H-quinone oxidoreductase subunit 4L, chloroplastic (101 aa).

The next 3 membrane-spanning stretches (helical) occupy residues 2-22, 32-52, and 61-81; these read ILEH…YGLI, MCLE…SDFF, and IFCI…LAIV.

The protein belongs to the complex I subunit 4L family. As to quaternary structure, NDH is composed of at least 16 different subunits, 5 of which are encoded in the nucleus.

The protein localises to the plastid. The protein resides in the chloroplast thylakoid membrane. It carries out the reaction a plastoquinone + NADH + (n+1) H(+)(in) = a plastoquinol + NAD(+) + n H(+)(out). It catalyses the reaction a plastoquinone + NADPH + (n+1) H(+)(in) = a plastoquinol + NADP(+) + n H(+)(out). Its function is as follows. NDH shuttles electrons from NAD(P)H:plastoquinone, via FMN and iron-sulfur (Fe-S) centers, to quinones in the photosynthetic chain and possibly in a chloroplast respiratory chain. The immediate electron acceptor for the enzyme in this species is believed to be plastoquinone. Couples the redox reaction to proton translocation, and thus conserves the redox energy in a proton gradient. This Lepidium virginicum (Virginia pepperweed) protein is NAD(P)H-quinone oxidoreductase subunit 4L, chloroplastic.